Consider the following 152-residue polypeptide: Xanthine-guanine phosphoribosyltransferase (152 aa).

5-phospho-alpha-D-ribose 1-diphosphate contacts are provided by residues arginine 37–glycine 38 and aspartate 88–threonine 96. A Mg(2+)-binding site is contributed by aspartate 89. Residues aspartate 92 and isoleucine 135 each coordinate guanine. Positions 92 and 135 each coordinate xanthine. GMP is bound by residues aspartate 92 to threonine 96 and tryptophan 134 to isoleucine 135.

This sequence belongs to the purine/pyrimidine phosphoribosyltransferase family. XGPT subfamily. As to quaternary structure, homotetramer. The cofactor is Mg(2+).

It localises to the cell inner membrane. It carries out the reaction GMP + diphosphate = guanine + 5-phospho-alpha-D-ribose 1-diphosphate. It catalyses the reaction XMP + diphosphate = xanthine + 5-phospho-alpha-D-ribose 1-diphosphate. The enzyme catalyses IMP + diphosphate = hypoxanthine + 5-phospho-alpha-D-ribose 1-diphosphate. It functions in the pathway purine metabolism; GMP biosynthesis via salvage pathway; GMP from guanine: step 1/1. The protein operates within purine metabolism; XMP biosynthesis via salvage pathway; XMP from xanthine: step 1/1. In terms of biological role, purine salvage pathway enzyme that catalyzes the transfer of the ribosyl-5-phosphate group from 5-phospho-alpha-D-ribose 1-diphosphate (PRPP) to the N9 position of the 6-oxopurines guanine and xanthine to form the corresponding ribonucleotides GMP (guanosine 5'-monophosphate) and XMP (xanthosine 5'-monophosphate), with the release of PPi. To a lesser extent, also acts on hypoxanthine. This is Xanthine-guanine phosphoribosyltransferase from Mannheimia succiniciproducens (strain KCTC 0769BP / MBEL55E).